The primary structure comprises 218 residues: Probable nicotinate-nucleotide adenylyltransferase (218 aa).

Belongs to the NadD family.

It catalyses the reaction nicotinate beta-D-ribonucleotide + ATP + H(+) = deamido-NAD(+) + diphosphate. It functions in the pathway cofactor biosynthesis; NAD(+) biosynthesis; deamido-NAD(+) from nicotinate D-ribonucleotide: step 1/1. Catalyzes the reversible adenylation of nicotinate mononucleotide (NaMN) to nicotinic acid adenine dinucleotide (NaAD). The protein is Probable nicotinate-nucleotide adenylyltransferase of Syntrophotalea carbinolica (strain DSM 2380 / NBRC 103641 / GraBd1) (Pelobacter carbinolicus).